The following is a 413-amino-acid chain: Transmembrane protein 237B (413 aa).

Residues 1 to 162 (MDPEAKVSSS…EDDDVITDPQ (162 aa)) are disordered. The segment covering 112-122 (DLVSNGDTLDQ) has biased composition (polar residues). Transmembrane regions (helical) follow at residues 233–253 (VIGL…IIVV), 274–294 (LAYP…VSAF), 312–332 (LSPV…SLSQ), and 360–380 (ILYP…LAWI).

It belongs to the TMEM237 family.

It localises to the membrane. Its subcellular location is the cell projection. The protein resides in the cilium. Functionally, component of the transition zone in primary cilia. Required for ciliogenesis. The sequence is that of Transmembrane protein 237B (tmem237b) from Danio rerio (Zebrafish).